Consider the following 274-residue polypeptide: Tryptophan synthase alpha chain (274 aa).

Catalysis depends on proton acceptor residues E49 and D60.

This sequence belongs to the TrpA family. Tetramer of two alpha and two beta chains.

The enzyme catalyses (1S,2R)-1-C-(indol-3-yl)glycerol 3-phosphate + L-serine = D-glyceraldehyde 3-phosphate + L-tryptophan + H2O. Its pathway is amino-acid biosynthesis; L-tryptophan biosynthesis; L-tryptophan from chorismate: step 5/5. The alpha subunit is responsible for the aldol cleavage of indoleglycerol phosphate to indole and glyceraldehyde 3-phosphate. The polypeptide is Tryptophan synthase alpha chain (Alkalilimnicola ehrlichii (strain ATCC BAA-1101 / DSM 17681 / MLHE-1)).